Reading from the N-terminus, the 38-residue chain is Large ribosomal subunit protein bL36A (38 aa).

The protein belongs to the bacterial ribosomal protein bL36 family.

The polypeptide is Large ribosomal subunit protein bL36A (Pectobacterium atrosepticum (strain SCRI 1043 / ATCC BAA-672) (Erwinia carotovora subsp. atroseptica)).